Consider the following 137-residue polypeptide: Competence protein ComGG (137 aa).

Residues 10-30 (GVLLYAVTIAAIFSLLLQFYL) form a helical membrane-spanning segment. Residues 106 to 137 (EKRDKKEEVATDSSEKVEKKKSEEKPEKKENS) are disordered.

The transformation pili are flexible filaments, consisting mainly of the major pilin ComGC and smaller amounts of the minor pilins, including at least ComGD, ComGF and ComGG, and perhaps ComGE. Interacts with ComGC; the interaction is probably direct. Interacts with ComGD. Interacts with ComGE. Interacts with ComGF. May act as a link between ComGC, ComGD and ComGF.

The protein localises to the fimbrium. It localises to the cell membrane. Its function is as follows. Required for formation of the type IV-like pilus (T4P) that plays a role in transformation. Transformation pili are dynamically extended and retracted, perhaps thereby promoting DNA uptake and transformation. Required for transformation. In Streptococcus pneumoniae (strain ATCC BAA-255 / R6), this protein is Competence protein ComGG.